The chain runs to 338 residues: Nicotinate-nucleotide--dimethylbenzimidazole phosphoribosyltransferase (338 aa).

Residue E306 is the Proton acceptor of the active site.

The protein belongs to the CobT family.

It carries out the reaction 5,6-dimethylbenzimidazole + nicotinate beta-D-ribonucleotide = alpha-ribazole 5'-phosphate + nicotinate + H(+). The protein operates within nucleoside biosynthesis; alpha-ribazole biosynthesis; alpha-ribazole from 5,6-dimethylbenzimidazole: step 1/2. Catalyzes the synthesis of alpha-ribazole-5'-phosphate from nicotinate mononucleotide (NAMN) and 5,6-dimethylbenzimidazole (DMB). This Cereibacter sphaeroides (strain KD131 / KCTC 12085) (Rhodobacter sphaeroides) protein is Nicotinate-nucleotide--dimethylbenzimidazole phosphoribosyltransferase.